A 196-amino-acid polypeptide reads, in one-letter code: MIPVVIEQTSRGERSYDIYSRLLKDRIIMLTGPVEDNMANSIIAQLLFLDAQDPTKDIYLYVNTPGGSVSAGLAIVDTMNFIKADVQTIVMGTAASMGTIIASSGAKGKRFMLPNAEYMIHQPMGGTGGGTQQTDMAIAAEHLLKTRNKLEKILADNSGKTVKQIHKDAERDYWMSAEETLAYGFIDQIMDNTKVK.

Residue Ser-96 is the Nucleophile of the active site. His-121 is an active-site residue.

This sequence belongs to the peptidase S14 family. In terms of assembly, fourteen ClpP subunits assemble into 2 heptameric rings which stack back to back to give a disk-like structure with a central cavity, resembling the structure of eukaryotic proteasomes.

Its subcellular location is the cytoplasm. The enzyme catalyses Hydrolysis of proteins to small peptides in the presence of ATP and magnesium. alpha-casein is the usual test substrate. In the absence of ATP, only oligopeptides shorter than five residues are hydrolyzed (such as succinyl-Leu-Tyr-|-NHMec, and Leu-Tyr-Leu-|-Tyr-Trp, in which cleavage of the -Tyr-|-Leu- and -Tyr-|-Trp bonds also occurs).. Cleaves peptides in various proteins in a process that requires ATP hydrolysis. Has a chymotrypsin-like activity. Plays a major role in the degradation of misfolded proteins. The polypeptide is ATP-dependent Clp protease proteolytic subunit (Streptococcus suis (strain 98HAH33)).